The sequence spans 932 residues: DNA mismatch repair protein MutS (932 aa).

Residue G615–S622 coordinates ATP.

The protein belongs to the DNA mismatch repair MutS family.

In terms of biological role, this protein is involved in the repair of mismatches in DNA. It is possible that it carries out the mismatch recognition step. This protein has a weak ATPase activity. In Clostridium botulinum (strain 657 / Type Ba4), this protein is DNA mismatch repair protein MutS.